A 524-amino-acid chain; its full sequence is Germ cell-less protein-like 1 (524 aa).

Residues 1 to 37 (MGALSSRVLRPAGRTEQPEPTPGAGGAARRSDAGEDA) are disordered. The short motif at 47-53 (GRKRKRS) is the Nuclear localization signal element. Residues 63–83 (DSETDDDEDEGDEQQRLLNTP) form a disordered region. Ser-64 bears the Phosphoserine mark. Residues 65-74 (ETDDDEDEGD) are compositionally biased toward acidic residues. The residue at position 66 (Thr-66) is a Phosphothreonine. The Nuclear localization signal signature appears at 83 to 89 (PRRKKLK). One can recognise a BTB domain in the interval 106 to 176 (SDIKICALGE…LYRDDVLIKP (71 aa)).

Interacts with TMPO-Beta, TSG101 and TFDP2. Interacts with EMD. In terms of tissue distribution, ubiquitously expressed at low levels throughout development and in adult tissues.

It localises to the nucleus matrix. Its function is as follows. Possible function in spermatogenesis. Enhances the degradation of MDM2 and increases the amount of p53 probably by modulating the nucleocytoplasmic transport. This chain is Germ cell-less protein-like 1 (Gmcl1), found in Mus musculus (Mouse).